Consider the following 526-residue polypeptide: MTETGDDLATVKKPIPFLVIFKDLRHVFSRDTTGREILGIAFPAALALAADPIASLIDTAFVGRLGAVQLAAVGVSIAIFNQASRITIFPLVSLTTSFVAEEDTMEKMKEEANKANLVHAETILVQDSLEKGISSPTSNDTNQPQQPPAPDTKSNSGNKSNKKEKRTIRTASTAMILGLILGLVQAIFLIFSSKLLLGVMGVKPNSPMLSPAHKYLSIRALGAPALLLSLAMQGIFRGFKDTKTPLFATVVADVINIVLDPIFIFVLRLGIIGAAIAHVISQYFMTLILFVFLAKKVNLIPPNFGDLQFGRFLKNGLLLLARTIAVTFCQTLAAAMAARLGTTPMAAFQICLQVWLTSSLLNDGLAVAGQAILACSFAEKDYNKVTAVASRVLQMGFVLGLGLSVFVGLGLYFGAGVFSKDPAVIHLMAIGIPFIAATQPINSLAFVLDGVNFGASDFAYTAYSMVGVAAISIAAVIYMAKTNGFIGIWIALTIYMALRAITGIARMATGTGPWRFLRGRSSSSSS.

Over 1 to 36 (MTETGDDLATVKKPIPFLVIFKDLRHVFSRDTTGRE) the chain is Cytoplasmic. Residues 37 to 57 (ILGIAFPAALALAADPIASLI) form a helical membrane-spanning segment. Topologically, residues 58 to 59 (DT) are extracellular. The helical transmembrane segment at 60–80 (AFVGRLGAVQLAAVGVSIAIF) threads the bilayer. Over 81 to 170 (NQASRITIFP…NKKEKRTIRT (90 aa)) the chain is Cytoplasmic. Residues 133-166 (ISSPTSNDTNQPQQPPAPDTKSNSGNKSNKKEKR) form a disordered region. Residues 134–144 (SSPTSNDTNQP) are compositionally biased toward polar residues. A helical membrane pass occupies residues 171–191 (ASTAMILGLILGLVQAIFLIF). Residues 192–215 (SSKLLLGVMGVKPNSPMLSPAHKY) are Extracellular-facing. A helical transmembrane segment spans residues 216–236 (LSIRALGAPALLLSLAMQGIF). The Cytoplasmic segment spans residues 237–244 (RGFKDTKT). Residues 245–267 (PLFATVVADVINIVLDPIFIFVL) traverse the membrane as a helical segment. Topologically, residues 268 to 270 (RLG) are extracellular. Residues 271-293 (IIGAAIAHVISQYFMTLILFVFL) form a helical membrane-spanning segment. Topologically, residues 294–316 (AKKVNLIPPNFGDLQFGRFLKNG) are cytoplasmic. A helical transmembrane segment spans residues 317–337 (LLLLARTIAVTFCQTLAAAMA). At 338 to 353 (ARLGTTPMAAFQICLQ) the chain is on the extracellular side. A helical membrane pass occupies residues 354-374 (VWLTSSLLNDGLAVAGQAILA). The Cytoplasmic portion of the chain corresponds to 375-396 (CSFAEKDYNKVTAVASRVLQMG). A helical transmembrane segment spans residues 397 to 417 (FVLGLGLSVFVGLGLYFGAGV). Residues 418-426 (FSKDPAVIH) are Extracellular-facing. The chain crosses the membrane as a helical span at residues 427 to 447 (LMAIGIPFIAATQPINSLAFV). The Cytoplasmic portion of the chain corresponds to 448 to 457 (LDGVNFGASD). A helical membrane pass occupies residues 458–478 (FAYTAYSMVGVAAISIAAVIY). The Extracellular portion of the chain corresponds to 479 to 484 (MAKTNG). A helical membrane pass occupies residues 485-505 (FIGIWIALTIYMALRAITGIA). Residues 506 to 526 (RMATGTGPWRFLRGRSSSSSS) are Cytoplasmic-facing.

It belongs to the multi antimicrobial extrusion (MATE) (TC 2.A.66.1) family. In terms of tissue distribution, expressed in roots in the pericycle and cells internal to the pericycle and surrounding the vascular tissue. Also expressed in seed and flower.

It localises to the cell membrane. Citrate transporter responsible for loading citrate into xylem tissues, which helps facilitate iron transport to shoots. Mediates the citrate release in the apoplastic spaces during plant development allowing iron nutrition between symplastically disconnected tissues. The sequence is that of Protein DETOXIFICATION 43 from Arabidopsis thaliana (Mouse-ear cress).